The sequence spans 317 residues: Probable cell division protein WhiA (317 aa).

The H-T-H motif DNA-binding region spans 276 to 310 (TLKELGEMVSGGKISKSGINHRLRKIDDIAEKLRA).

This sequence belongs to the WhiA family.

Its function is as follows. Involved in cell division and chromosome segregation. The sequence is that of Probable cell division protein WhiA from Bacillus thuringiensis (strain Al Hakam).